A 148-amino-acid chain; its full sequence is IQ domain-containing protein F5 (148 aa).

IQ domains lie at 11-40 (ETSAAVRIQAWWRGTLLRRTLLHAALSAWI) and 67-96 (KTWAIVKLQSWFRMWHIRHRYCRLLNAVRI).

This Mus musculus (Mouse) protein is IQ domain-containing protein F5 (Iqcf5).